Here is a 458-residue protein sequence, read N- to C-terminus: MSTEDAAITVIGAGLAGSEAALAAARLGVRVRLHEMRPHKMTPAHRTGNFAELVCSTSLGGEGEMQAKGLLQAELRSVGGAIVGAADSSRVPAGNALAVDRDEFSARVTQAVRAHPLIEVVEGEVEAVPEGIGVIATGPLTSDALAADLARRTGSERLSFYDAAAPVIAFESINMDVAWRAGRYDQSADYINCPFTKEEYLRFFEALEQARRHTPHDWEQLEFFEGCMPIEELARRGVDTPRFGPMSPKGLDDPRTGRWPYAVAQLRQEDRAGRMWSLVGFQTGLKWGDQKVVVNLIPGLENAEIVRYGVMHRNTYLNAPEVLDATLQLRADPQKFVAGVLAGTEGYLESAATGWLAGTNAARLARGLTPLTPPPESMLGGLVRYLASANPKGFQPMNVNWALVPELPVPEGRRKLGKREKRPVLFQRGLNAFVAWAREEAGLPVTPPARPTAALATE.

12 to 17 (GAGLAG) contributes to the FAD binding site.

This sequence belongs to the MnmG family. TrmFO subfamily. FAD serves as cofactor.

The protein resides in the cytoplasm. The enzyme catalyses uridine(54) in tRNA + (6R)-5,10-methylene-5,6,7,8-tetrahydrofolate + NADH + H(+) = 5-methyluridine(54) in tRNA + (6S)-5,6,7,8-tetrahydrofolate + NAD(+). It carries out the reaction uridine(54) in tRNA + (6R)-5,10-methylene-5,6,7,8-tetrahydrofolate + NADPH + H(+) = 5-methyluridine(54) in tRNA + (6S)-5,6,7,8-tetrahydrofolate + NADP(+). In terms of biological role, catalyzes the folate-dependent formation of 5-methyl-uridine at position 54 (M-5-U54) in all tRNAs. The sequence is that of Methylenetetrahydrofolate--tRNA-(uracil-5-)-methyltransferase TrmFO from Deinococcus geothermalis (strain DSM 11300 / CIP 105573 / AG-3a).